A 210-amino-acid polypeptide reads, in one-letter code: Thymidylate kinase (210 aa).

Position 10 to 17 (10 to 17 (GPEGAGKS)) interacts with ATP.

The protein belongs to the thymidylate kinase family.

It catalyses the reaction dTMP + ATP = dTDP + ADP. Functionally, phosphorylation of dTMP to form dTDP in both de novo and salvage pathways of dTTP synthesis. This Ectopseudomonas mendocina (strain ymp) (Pseudomonas mendocina) protein is Thymidylate kinase.